We begin with the raw amino-acid sequence, 262 residues long: uncharacterized protein (262 aa).

Residues 5 to 107 (PLISLDVEGV…MIEHKLRTFC (103 aa)) enclose the BTB domain. One can recognise a CRIB domain in the interval 182 to 195 (ISLPRNFTHIAHVG).

This is an uncharacterized protein from Caenorhabditis elegans.